A 161-amino-acid polypeptide reads, in one-letter code: Serine-protein kinase RsbW (161 aa).

This sequence belongs to the anti-sigma-factor family.

The enzyme catalyses L-seryl-[protein] + ATP = O-phospho-L-seryl-[protein] + ADP + H(+). The catalysed reaction is L-threonyl-[protein] + ATP = O-phospho-L-threonyl-[protein] + ADP + H(+). Its function is as follows. Negative regulator of sigma-B activity. Phosphorylates and inactivates its specific antagonist protein, RsbV. Upon phosphorylation of RsbV, RsbW is released and binds to sigma-B, thereby blocking its ability to form an RNA polymerase holoenzyme (E-sigma-B). The protein is Serine-protein kinase RsbW of Bacillus licheniformis (strain ATCC 14580 / DSM 13 / JCM 2505 / CCUG 7422 / NBRC 12200 / NCIMB 9375 / NCTC 10341 / NRRL NRS-1264 / Gibson 46).